The sequence spans 101 residues: Putative pterin-4-alpha-carbinolamine dehydratase (101 aa).

This sequence belongs to the pterin-4-alpha-carbinolamine dehydratase family.

The catalysed reaction is (4aS,6R)-4a-hydroxy-L-erythro-5,6,7,8-tetrahydrobiopterin = (6R)-L-erythro-6,7-dihydrobiopterin + H2O. In Rhodopseudomonas palustris (strain HaA2), this protein is Putative pterin-4-alpha-carbinolamine dehydratase.